The chain runs to 513 residues: MQLNSTEISELIKKRIAQFDVVSEARNTGTIVSVSDGIIRIHGLSDVMQGEMIALPGNRYAMALNLERDSVGAVVMGPYADLAEGMEVQCTGRILEVPVGSGLLGRVVNTLGQPIDGKGEIENDDFSPVEVIAPGVIDRRSVDQPVQTGYKAVDSMVPIGRGQRELIIGDRQTGKTALAIDAIINQRNSGIKCIYVAIGQKASTIANVVRKLEEHGALANTIVVAASASESAALQYLAPYAGCAMGEYFRDRGEDALIVYDDLSKQAVAYRQISLLLRRPPGREAYPGDVFYLHSRLLERASRVNEDYVEKFTKGEVKGKTGSLTALPIIETQAGDVSAFVPTNVISITDGQIFLESNLFNSGIRPAVNPGISVSRVGGSAQTKVIKKLAGGIRTALAQYRELAAFAQFASDLDDATRKQLSHGEKVTELLKQKQFAPLSVAEQAVILFAVEFGYLDDVELSKIASFETALLDYSNRNHAEFMQELNKTGNYNDEIKDTLKSILDGFKANSAW.

Glycine 169 to threonine 176 serves as a coordination point for ATP.

The protein belongs to the ATPase alpha/beta chains family. In terms of assembly, F-type ATPases have 2 components, CF(1) - the catalytic core - and CF(0) - the membrane proton channel. CF(1) has five subunits: alpha(3), beta(3), gamma(1), delta(1), epsilon(1). CF(0) has three main subunits: a(1), b(2) and c(9-12). The alpha and beta chains form an alternating ring which encloses part of the gamma chain. CF(1) is attached to CF(0) by a central stalk formed by the gamma and epsilon chains, while a peripheral stalk is formed by the delta and b chains.

The protein localises to the cell inner membrane. It carries out the reaction ATP + H2O + 4 H(+)(in) = ADP + phosphate + 5 H(+)(out). Functionally, produces ATP from ADP in the presence of a proton gradient across the membrane. The alpha chain is a regulatory subunit. In Haemophilus influenzae (strain 86-028NP), this protein is ATP synthase subunit alpha.